The sequence spans 509 residues: Maturase K (509 aa).

It belongs to the intron maturase 2 family. MatK subfamily.

It is found in the plastid. The protein resides in the chloroplast. In terms of biological role, usually encoded in the trnK tRNA gene intron. Probably assists in splicing its own and other chloroplast group II introns. This Nicotiana tomentosiformis (Tobacco) protein is Maturase K.